The sequence spans 805 residues: Na(+)/H(+) antiporter subunit A1 (805 aa).

20 helical membrane passes run 1-21, 30-50, 79-99, 117-137, 166-186, 201-221, 226-246, 265-285, 300-320, 337-357, 377-397, 427-447, 480-500, 531-551, 591-611, 623-643, 646-666, 671-691, 707-727, and 766-786; these read MSLL…IPFV, LGWF…SYIS, LGLL…LYSI, LFMG…LYLF, MLVT…LSIA, EIQT…GAMT, FPFY…SAYL, IFAV…ITLF, ILAF…GVGA, FTAA…LFMI, LTIM…MAGI, LGIL…VYSI, ILAI…GSII, LGIY…IYLL, LVII…VTPF, PFEL…IFAK, LFSI…FIFF, LALT…LCFY, LVNI…GLIA, and TLFE…MIKL.

It belongs to the CPA3 antiporters (TC 2.A.63) subunit A family. May form a heterooligomeric complex that consists of seven subunits: mnhA1, mnhB1, mnhC1, mnhD1, mnhE1, mnhF1 and mnhG1.

The protein resides in the cell membrane. Functionally, mnh complex is a Na(+)/H(+) antiporter involved in Na(+) excretion. The chain is Na(+)/H(+) antiporter subunit A1 (mnhA1) from Staphylococcus saprophyticus subsp. saprophyticus (strain ATCC 15305 / DSM 20229 / NCIMB 8711 / NCTC 7292 / S-41).